Here is a 189-residue protein sequence, read N- to C-terminus: Elongation factor P (189 aa).

The protein belongs to the elongation factor P family.

It is found in the cytoplasm. Its pathway is protein biosynthesis; polypeptide chain elongation. Its function is as follows. Involved in peptide bond synthesis. Stimulates efficient translation and peptide-bond synthesis on native or reconstituted 70S ribosomes in vitro. Probably functions indirectly by altering the affinity of the ribosome for aminoacyl-tRNA, thus increasing their reactivity as acceptors for peptidyl transferase. The sequence is that of Elongation factor P from Aster yellows witches'-broom phytoplasma (strain AYWB).